The primary structure comprises 673 residues: MGNVQSEPSAGGGSRKEQASDRASDSRRTPLVEPEVTPSSPAMRLARGLGVWFPGSSGPPGLLIPPEPQASSSPLPLTLELPSPVTPPPEEAAAVSTPPPPPVGTLLPAPSKWRKPTGTSVPRIRGLLEASHRGQGDPPSLRPLPPLPRQLTEKDPVLRAPAPPPTPLEPRKQLPPAPSTCDPQPLSRRITLASSATSPTESQVRHSSEGQAAGGAHGGVPPQAGEGEMARSATSESGLSLLCKVTFKSGPHLSPTSASGPLAAKASPGAGGGGLFASSGAISYAEVLKQGPQPPGATRPLGEVPPGATRPLGEVPRAAQETEGGDGDGEGCSGPPSVPAPLARALPPPPYTTFPGSKPKFDWVSPPDGTERHFRFNGAVGGIGAPRRRTTTLSGPWGSPPPRSGQTHPSSGPRRPTPALLAPPMFIFPAPNNGEPVRPVPPSPQQIPPLPPPPPTPPATPPPAPPPTPQPPALPRTPILVARPPTPGPGHLESALAPTPPSTLSPTAAADQVPAATPATVTSQVPATATAELSPPMPQPKTRTRRNKGPRAARGVIREEGTSGDGPREPNTAPVTDSSSGGGGGGSNGTSTAGASNKGTARHWPPFEVLNSCPCKCYCRHQRRHRRLPRNVSAWLSTPTNHLSEPPWVATVKLAGSLVAGLEHYDLQATHST.

The tract at residues 1-599 is disordered; it reads MGNVQSEPSA…TSTAGASNKG (599 aa). Residues 14-30 are compositionally biased toward basic and acidic residues; sequence SRKEQASDRASDSRRTP. Residues 70–83 are compositionally biased toward low complexity; sequence ASSSPLPLTLELPS. Positions 125 to 506 are interaction with GGNBP1; that stretch reads RGLLEASHRG…APTPPSTLSP (382 aa). The span at 161-178 shows a compositional bias: pro residues; that stretch reads PAPPPTPLEPRKQLPPAP. Over residues 192–202 the composition is skewed to polar residues; that stretch reads LASSATSPTES. Residues 257–268 show a composition bias toward low complexity; that stretch reads SASGPLAAKASP. At serine 399 the chain carries Phosphoserine. A compositionally biased stretch (low complexity) spans 413-424; the sequence is PRRPTPALLAPP. The span at 438-475 shows a compositional bias: pro residues; that stretch reads RPVPPSPQQIPPLPPPPPTPPATPPPAPPPTPQPPALP. Residues 504-531 show a composition bias toward low complexity; sequence LSPTAAADQVPAATPATVTSQVPATATA. The interval 511–673 is interactions with ZNF403/GGNBP2 and OAZ3; it reads DQVPAATPAT…HYDLQATHST (163 aa). Over residues 542–551 the composition is skewed to basic residues; the sequence is TRTRRNKGPR.

In terms of assembly, isoform 1 and isoform 3 interact with FANCL. Isoform 1 interacts with GGNBP1, ZNF403/GGNBP2 and OAZ3. Isoform 2 interacts with GGNBP1. In terms of tissue distribution, testis-specific. Specifically expressed in the germ cells and not in the somatic, Sertoli, or Leydig cells. In adult testis, expression starts in stage VIII pachytene spermatocytes, increases in stage IX and X pachytene spermatocytes, and culminates in stage XI diplotene spermatocytes and the meiotic cells in stage XII. Expression decreases slightly in step 1-3 spermatids, further decreases in step 4-11 spermatids, and is no longer detectable in step 12 spermatids and beyond. Isoform 2 is mainly expressed in testis.

The protein localises to the cytoplasm. It is found in the perinuclear region. It localises to the cytoplasmic vesicle. Its subcellular location is the nucleus. The protein resides in the nucleolus. May be involved in spermatogenesis. This is Gametogenetin (Ggn) from Mus musculus (Mouse).